A 483-amino-acid polypeptide reads, in one-letter code: GDP-fucose protein O-fucosyltransferase 3 (483 aa).

The Cytoplasmic segment spans residues 1 to 8; it reads MVRIPRRK. The chain crosses the membrane as a helical; Signal-anchor for type II membrane protein span at residues 9–31; the sequence is LLPSCLCMTATVFLMVTVQVLVE. Over 32-483 the chain is Lumenal; sequence LGKFERKKFK…FWALVFKDSF (452 aa). Residues 45 to 64 form a disordered region; it reads LQDGQKDVEGDPKHLNPLPK. N-linked (GlcNAc...) asparagine glycans are attached at residues asparagine 110, asparagine 168, and asparagine 318. Cysteine 389 and cysteine 392 form a disulfide bridge. The N-linked (GlcNAc...) asparagine glycan is linked to asparagine 468.

Belongs to the glycosyltransferase 10 family.

The protein localises to the endoplasmic reticulum membrane. The catalysed reaction is L-threonyl-[protein] + GDP-beta-L-fucose = 3-O-(alpha-L-fucosyl)-L-threonyl-[protein] + GDP + H(+). It carries out the reaction L-seryl-[protein] + GDP-beta-L-fucose = 3-O-(alpha-L-fucosyl)-L-seryl-[protein] + GDP + H(+). It functions in the pathway protein modification; protein glycosylation. Protein O-fucosyltransferase that specifically catalyzes O-fucosylation of serine or threonine residues in EMI domains of target proteins, such as MMRN1, MMRN2 and EMID1. Attaches fucose through an O-glycosidic linkage. O-fucosylation of EMI domain-containing proteins may be required for facilitating protein folding and secretion. May also show alpha-(1,3)-fucosyltransferase activity toward the innermost N-acetyl glucosamine (GlcNAc) residue in biantennary N-glycan acceptors. However, this was tested with a library of synthetic substrates and this activity is unsure in vivo. May be involved in biosynthesis of Lewis X-carrying biantennary N-glycans that regulate neuron stem cell self-renewal during brain development. This chain is GDP-fucose protein O-fucosyltransferase 3 (Fut10), found in Rattus norvegicus (Rat).